Here is a 327-residue protein sequence, read N- to C-terminus: Thiosulfate dehydrogenase (327 aa).

The first 26 residues, 1–26 (MKIIPYRKRSVLIATIFAISAVGITG), serve as a signal peptide directing secretion. Residues 66–78 (NDMTATAGGTDTA) are compositionally biased toward low complexity. The tract at residues 66-93 (NDMTATAGGTDTASGKPTIKMPDESTIP) is disordered. Cytochrome c domains are found at residues 99–196 (AAVR…SWLS) and 219–305 (PNTD…THLP). Residues C125, C128, H129, C232, C235, and H236 each coordinate heme c.

In terms of assembly, monomer. Post-translationally, binds 2 heme c groups covalently per subunit.

It is found in the periplasm. It carries out the reaction 2 thiosulfate + 2 Fe(III)-[cytochrome c] = tetrathionate + 2 Fe(II)-[cytochrome c] + 2 H(+). Catalyzes the oxidation of 2 molecules of thiosulfate to tetrathionate. This Psychrobacter arcticus (strain DSM 17307 / VKM B-2377 / 273-4) protein is Thiosulfate dehydrogenase (tsdA).